Consider the following 251-residue polypeptide: 5-oxoprolinase subunit A (251 aa).

This sequence belongs to the LamB/PxpA family. As to quaternary structure, forms a complex composed of PxpA, PxpB and PxpC.

The enzyme catalyses 5-oxo-L-proline + ATP + 2 H2O = L-glutamate + ADP + phosphate + H(+). In terms of biological role, catalyzes the cleavage of 5-oxoproline to form L-glutamate coupled to the hydrolysis of ATP to ADP and inorganic phosphate. In Paracidovorax citrulli (strain AAC00-1) (Acidovorax citrulli), this protein is 5-oxoprolinase subunit A.